Here is a 60-residue protein sequence, read N- to C-terminus: Large ribosomal subunit protein bL32 (60 aa).

It belongs to the bacterial ribosomal protein bL32 family.

The sequence is that of Large ribosomal subunit protein bL32 from Streptococcus suis (strain 05ZYH33).